The primary structure comprises 355 residues: Zinc transporter ZIP13 homolog (355 aa).

Asparagine 4 carries an N-linked (GlcNAc...) asparagine glycan. 3 helical membrane passes run 37–57, 79–99, and 118–138; these read VFSL…LIII, VLLS…LLPE, and LWVL…SGYA. N-linked (GlcNAc...) asparagine glycosylation is present at asparagine 218. Transmembrane regions (helical) follow at residues 273 to 293 and 301 to 321; these read LLTA…SGVT and SWIM…TVLP.

The protein belongs to the ZIP transporter (TC 2.A.5) family. KE4/Catsup subfamily.

It localises to the basolateral cell membrane. It is found in the golgi apparatus membrane. Its function is as follows. Involved in zinc transport and homeostasis. This chain is Zinc transporter ZIP13 homolog (Zip99C), found in Drosophila melanogaster (Fruit fly).